Here is a 289-residue protein sequence, read N- to C-terminus: Nucleotide-binding protein Franean1_2060 (289 aa).

13-20 is an ATP binding site; that stretch reads GLSGAGRS. 64–67 contacts GTP; that stretch reads DVRG.

It belongs to the RapZ-like family.

Its function is as follows. Displays ATPase and GTPase activities. The protein is Nucleotide-binding protein Franean1_2060 of Parafrankia sp. (strain EAN1pec).